A 168-amino-acid polypeptide reads, in one-letter code: Ribosome maturation factor RimM (168 aa).

One can recognise a PRC barrel domain in the interval 96–168; the sequence is KDEYYWGDLV…RIRVAWQKDW (73 aa).

The protein belongs to the RimM family. In terms of assembly, binds ribosomal protein uS19.

Its subcellular location is the cytoplasm. An accessory protein needed during the final step in the assembly of 30S ribosomal subunit, possibly for assembly of the head region. Essential for efficient processing of 16S rRNA. May be needed both before and after RbfA during the maturation of 16S rRNA. It has affinity for free ribosomal 30S subunits but not for 70S ribosomes. This chain is Ribosome maturation factor RimM, found in Azoarcus sp. (strain BH72).